The primary structure comprises 107 residues: Urease subunit beta (107 aa).

The protein belongs to the urease beta subunit family. In terms of assembly, heterotrimer of UreA (gamma), UreB (beta) and UreC (alpha) subunits. Three heterotrimers associate to form the active enzyme.

It is found in the cytoplasm. The catalysed reaction is urea + 2 H2O + H(+) = hydrogencarbonate + 2 NH4(+). Its pathway is nitrogen metabolism; urea degradation; CO(2) and NH(3) from urea (urease route): step 1/1. The protein is Urease subunit beta of Escherichia coli.